A 407-amino-acid polypeptide reads, in one-letter code: Argininosuccinate synthase (407 aa).

Residues 10-18 (AYSGGLDTS) and Ala37 contribute to the ATP site. Residues Tyr88 and Ser93 each coordinate L-citrulline. Gly118 is an ATP binding site. L-aspartate contacts are provided by Thr120, Asn124, and Asp125. Asn124 provides a ligand contact to L-citrulline. Positions 128, 179, 188, 264, and 276 each coordinate L-citrulline.

This sequence belongs to the argininosuccinate synthase family. Type 1 subfamily. Homotetramer.

The protein localises to the cytoplasm. It catalyses the reaction L-citrulline + L-aspartate + ATP = 2-(N(omega)-L-arginino)succinate + AMP + diphosphate + H(+). The protein operates within amino-acid biosynthesis; L-arginine biosynthesis; L-arginine from L-ornithine and carbamoyl phosphate: step 2/3. This chain is Argininosuccinate synthase, found in Jannaschia sp. (strain CCS1).